Here is a 396-residue protein sequence, read N- to C-terminus: Endo-1,4-beta-xylanase A (396 aa).

The N-terminal stretch at 1-28 (MITLFRKPFVAGLAISLLVGGGIGNVAA) is a signal peptide. Residues 51-396 (AWQVASLSER…VKPAYWRIID (346 aa)) form the GH10 domain. Residue E195 is the Proton donor of the active site. E301 acts as the Nucleophile in catalysis.

It belongs to the glycosyl hydrolase 10 (cellulase F) family.

It localises to the secreted. The enzyme catalyses Endohydrolysis of (1-&gt;4)-beta-D-xylosidic linkages in xylans.. The protein operates within glycan degradation; xylan degradation. The polypeptide is Endo-1,4-beta-xylanase A (xynA) (Halalkalibacterium halodurans (strain ATCC BAA-125 / DSM 18197 / FERM 7344 / JCM 9153 / C-125) (Bacillus halodurans)).